The following is a 486-amino-acid chain: Corytuberine synthase (486 aa).

The chain crosses the membrane as a helical span at residues 6–21; it reads ALFSLIPVILVFILLL. Residue Cys428 participates in heme binding.

Belongs to the cytochrome P450 family. Heme serves as cofactor.

It is found in the endoplasmic reticulum membrane. The catalysed reaction is (S)-reticuline + reduced [NADPH--hemoprotein reductase] + O2 = (S)-corytuberine + oxidized [NADPH--hemoprotein reductase] + 2 H2O + 2 H(+). With respect to regulation, inhibited by ketoconazole. Cytochrome P450 that catalyzes an intramolecular C-C phenol coupling of (S)-reticuline in magnoflorine biosynthesis. Catalyzes the formation of (S)-corytuberine from (S)-reticuline, and also, with a lover efficiency, the 4'-O-demethylation of codamine to produce orientaline, and subsequent C-C-phenol coupling of orientaline. Can also use (R,S)-norreticuline, (R,S)-orientaline, (S)-N-methylcoclaurine and (S)-coclaurine as substrates, but not (R,S)-6-O-methyllaudanosoline, (R,S)-6-O-methylnorlaudanosoline, (R,S)-laudanine, (R,S)-norlaudanine, (R,S)-4'-O-methyllaudanosoline, (R,S)-pseudocodamine, (R,S)-norpseudocodamine, (R,S)-laudanosine, (R,S)-norlaudanosine, (R,S)-laudanosoline or (R,S)-norlaudanosoline. This Coptis japonica (Japanese goldthread) protein is Corytuberine synthase.